An 818-amino-acid polypeptide reads, in one-letter code: Glycerol-3-phosphate acyltransferase (818 aa).

Residues 305–310 (HRSHMD) carry the HXXXXD motif motif.

It belongs to the GPAT/DAPAT family.

It is found in the cell inner membrane. It carries out the reaction sn-glycerol 3-phosphate + an acyl-CoA = a 1-acyl-sn-glycero-3-phosphate + CoA. It participates in phospholipid metabolism; CDP-diacylglycerol biosynthesis; CDP-diacylglycerol from sn-glycerol 3-phosphate: step 1/3. The chain is Glycerol-3-phosphate acyltransferase from Photorhabdus laumondii subsp. laumondii (strain DSM 15139 / CIP 105565 / TT01) (Photorhabdus luminescens subsp. laumondii).